The following is a 142-amino-acid chain: MAVAAVKWVMSKRTILKHLFPVQNGALYCVCHKSTYSPLPDDYNCNVELALTSDGRTIVCYHPSVDIPYEHTKPIPRPDPVHNNEETHDQVLKTRLEEKVEHLEEGPMIEQLSKMFFTTKHRWYPHGRYHRCRKNLNPPKDR.

Residues 1–32 (MAVAAVKWVMSKRTILKHLFPVQNGALYCVCH) constitute a mitochondrion transit peptide.

This sequence belongs to the mitochondrion-specific ribosomal protein mL42 family. In terms of assembly, component of the mitochondrial large ribosomal subunit (mt-LSU). Mature mammalian 55S mitochondrial ribosomes consist of a small (28S) and a large (39S) subunit. The 28S small subunit contains a 12S ribosomal RNA (12S mt-rRNA) and 30 different proteins. The 39S large subunit contains a 16S rRNA (16S mt-rRNA), a copy of mitochondrial valine transfer RNA (mt-tRNA(Val)), which plays an integral structural role, and 52 different proteins.

Its subcellular location is the mitochondrion. The sequence is that of Large ribosomal subunit protein mL42 (MRPL42) from Homo sapiens (Human).